The following is a 212-amino-acid chain: Uridine kinase (212 aa).

12–19 (GGSGGGKT) is a binding site for ATP.

Belongs to the uridine kinase family.

The protein localises to the cytoplasm. It catalyses the reaction uridine + ATP = UMP + ADP + H(+). The enzyme catalyses cytidine + ATP = CMP + ADP + H(+). The protein operates within pyrimidine metabolism; CTP biosynthesis via salvage pathway; CTP from cytidine: step 1/3. It functions in the pathway pyrimidine metabolism; UMP biosynthesis via salvage pathway; UMP from uridine: step 1/1. The chain is Uridine kinase from Streptococcus pneumoniae serotype 19F (strain G54).